The primary structure comprises 157 residues: Protein Smg (157 aa).

It belongs to the Smg family.

The protein is Protein Smg of Escherichia coli O7:K1 (strain IAI39 / ExPEC).